The following is a 400-amino-acid chain: Nicotinate phosphoribosyltransferase (400 aa).

The residue at position 220 (His-220) is a Phosphohistidine; by autocatalysis.

This sequence belongs to the NAPRTase family. Transiently phosphorylated on a His residue during the reaction cycle. Phosphorylation strongly increases the affinity for substrates and increases the rate of nicotinate D-ribonucleotide production. Dephosphorylation regenerates the low-affinity form of the enzyme, leading to product release.

It catalyses the reaction nicotinate + 5-phospho-alpha-D-ribose 1-diphosphate + ATP + H2O = nicotinate beta-D-ribonucleotide + ADP + phosphate + diphosphate. It participates in cofactor biosynthesis; NAD(+) biosynthesis; nicotinate D-ribonucleotide from nicotinate: step 1/1. Catalyzes the synthesis of beta-nicotinate D-ribonucleotide from nicotinate and 5-phospho-D-ribose 1-phosphate at the expense of ATP. In Shigella boydii serotype 18 (strain CDC 3083-94 / BS512), this protein is Nicotinate phosphoribosyltransferase.